Consider the following 430-residue polypeptide: Cell division protein FtsZ (430 aa).

GTP-binding positions include 76-80 (GGGCN), 163-165 (GTG), E194, R198, and D242. The interval 374-418 (KEKPQAKTSSKPVLSGPPAGVETVPSTTTPEDPLGEIPMAPELDI) is disordered.

It belongs to the FtsZ family. As to quaternary structure, homodimer. Polymerizes to form a dynamic ring structure in a strictly GTP-dependent manner. Interacts directly with several other division proteins.

The protein resides in the cytoplasm. Functionally, essential cell division protein that forms a contractile ring structure (Z ring) at the future cell division site. The regulation of the ring assembly controls the timing and the location of cell division. One of the functions of the FtsZ ring is to recruit other cell division proteins to the septum to produce a new cell wall between the dividing cells. Binds GTP and shows GTPase activity. The protein is Cell division protein FtsZ of Synechocystis sp. (strain ATCC 27184 / PCC 6803 / Kazusa).